Here is a 550-residue protein sequence, read N- to C-terminus: (S)-beta-bisabolene synthase (550 aa).

Mg(2+) contacts are provided by Asp-303, Asp-307, Ser-451, and Glu-455. Residues 303 to 307 (DDTYD) carry the DDXXD motif motif.

It belongs to the terpene synthase family. Tpsa subfamily. Requires Mg(2+) as cofactor. Mn(2+) serves as cofactor. As to expression, expressed only in young rhizomes. Not detected in leaves, roots and mature rhizomes.

The enzyme catalyses (2E,6E)-farnesyl diphosphate = (S)-beta-bisabolene + diphosphate. Functionally, sesquiterpene synthase involved in the biosynthesis of bisabolene. The chain is (S)-beta-bisabolene synthase (TPS1) from Zingiber officinale (Ginger).